Consider the following 330-residue polypeptide: G-protein coupled bile acid receptor 1 (330 aa).

Topologically, residues 1-19 (MTPNSTGEVPGPIPRGALE) are extracellular. The N-linked (GlcNAc...) asparagine glycan is linked to asparagine 4. Residues 20–40 (LSLALASLIIAANLLLALGIA) form a helical membrane-spanning segment. Over 41-50 (CDRRLRSPPA) the chain is Cytoplasmic. The chain crosses the membrane as a helical span at residues 51–71 (GCFFLSLLLAGLLTGLALPTL). At 72–85 (PGLWRQSHRGYWSC) the chain is on the extracellular side. Cysteines 85 and 155 form a disulfide. The helical transmembrane segment at 86-106 (LLVYLAPNFSFLSLLANLLLV) threads the bilayer. Residues 107-125 (HGERYVAVLRPLQPPGSIR) lie on the Cytoplasmic side of the membrane. The helical transmembrane segment at 126-146 (LALLLTWTGPLLFASLPALGW) threads the bilayer. At 147–169 (NHWGPEANCSSQTIFPAPYLYLE) the chain is on the extracellular side. Asparagine 154 is a glycosylation site (N-linked (GlcNAc...) asparagine). Residues 170–190 (VYGLLLPAVGAAALLSAHVLL) form a helical membrane-spanning segment. Residues 191-230 (AAHRQLQDIRRLERAVCRDAPSALARALTWRQARAQAGAT) are Cytoplasmic-facing. The helical transmembrane segment at 231-251 (LLFGLCWGPYVATLFLSVLAY) threads the bilayer. Over 252-261 (EQRPPLGPGT) the chain is Extracellular. Residues 262–282 (LLSLLSLGSASAAAVPVAMGL) traverse the membrane as a helical segment. The Cytoplasmic portion of the chain corresponds to 283 to 330 (GDHRYTAPWRAAARRWLRGLRGRGSQASPGPSTAYHTSSQSSVDVDLN). The interval 304 to 330 (GRGSQASPGPSTAYHTSSQSSVDVDLN) is disordered. The span at 307-330 (SQASPGPSTAYHTSSQSSVDVDLN) shows a compositional bias: polar residues.

It belongs to the G-protein coupled receptor 1 family. As to expression, expressed at high level in spleen. Expressed at lower level in thymus, heart, lung, liver, kidney, ileum, blood and adherent alveolar macrophage cells.

It localises to the cell membrane. Functionally, receptor for bile acid. Bile-acid binding induces its internalization, activation of extracellular signal-regulated kinase and intracellular cAMP production. May be involved in the suppression of macrophage functions by bile acids. Involved in bile acid promoted GLP1R secretion. This Oryctolagus cuniculus (Rabbit) protein is G-protein coupled bile acid receptor 1 (GPBAR1).